The sequence spans 306 residues: Glutathione transport system permease protein GsiC (306 aa).

At 1-8 (MLNYVLKR) the chain is on the cytoplasmic side. The chain crosses the membrane as a helical span at residues 9–29 (LLGLIPTLLIVAVLVFLFVHL). At 30–102 (LPGDPARLIA…SRFLPTLWLT (73 aa)) the chain is on the periplasmic side. The region spanning 95 to 292 (FLPTLWLTIT…LEFILINLVV (198 aa)) is the ABC transmembrane type-1 domain. A helical membrane pass occupies residues 103–123 (ITSMIWAVLFGMAIGIAAAVW). The Cytoplasmic portion of the chain corresponds to 124–134 (RNRWPDRLGMT). The helical transmembrane segment at 135–155 (LAVTGISFPAFALGMLLMQIF) threads the bilayer. Topologically, residues 156–168 (SVDLGWLPTVGAD) are periplasmic. A helical membrane pass occupies residues 169-189 (SWQHYILPSLTLGAAVASVMA). Residues 190–228 (RFTRSSFVDVLSEDYMRTARAKGVSETWVVLKHGLRNAM) are Cytoplasmic-facing. The chain crosses the membrane as a helical span at residues 229–249 (IPVVTMMGLQFGFLLGGSIVV). At 250–278 (EKVFNWPGLGRLLVDSVDMRDYPVIQAEV) the chain is on the periplasmic side. A helical membrane pass occupies residues 279-299 (LLFSLEFILINLVVDVLYAAI). Residues 300–306 (NPAIRYK) are Cytoplasmic-facing.

It belongs to the binding-protein-dependent transport system permease family. As to quaternary structure, the complex is composed of two ATP-binding proteins (GsiA), two transmembrane proteins (GsiC and GsiD) and a solute-binding protein (GsiB).

The protein resides in the cell inner membrane. In terms of biological role, part of the ABC transporter complex GsiABCD involved in glutathione import. Probably responsible for the translocation of the substrate across the membrane. The chain is Glutathione transport system permease protein GsiC from Salmonella typhimurium (strain LT2 / SGSC1412 / ATCC 700720).